A 137-amino-acid polypeptide reads, in one-letter code: Large-conductance mechanosensitive channel (137 aa).

2 helical membrane-spanning segments follow: residues 14–34 (VLDL…INSL) and 81–101 (GSFL…FLIV).

It belongs to the MscL family. In terms of assembly, homopentamer.

The protein localises to the cell membrane. Functionally, channel that opens in response to stretch forces in the membrane lipid bilayer. May participate in the regulation of osmotic pressure changes within the cell. This Chloroflexus aggregans (strain MD-66 / DSM 9485) protein is Large-conductance mechanosensitive channel.